The following is a 3993-amino-acid chain: Intermembrane lipid transfer protein VPS13B (3993 aa).

The 101-residue stretch at 2–102 folds into the Chorein N-terminal domain; that stretch reads LESYVTPILM…KDGIQDDHES (101 aa). Positions 100 to 133 are disordered; the sequence is HESCGSNSTNRSTAENTKSSIKPRRIQQAAPADP. Positions 103–119 are enriched in polar residues; that stretch reads CGSNSTNRSTAENTKSS. Phosphoserine is present on residues Ser-413, Ser-998, Ser-1001, and Ser-1032. 3 disordered regions span residues 1262–1303, 1616–1637, and 1735–1770; these read SPVW…PFSD, DQLK…ERNS, and TKAT…DSGI. Over residues 1264–1291 the composition is skewed to polar residues; sequence VWSSVGTAPPDTSTCSPSADIGTTTEGD. Residues 1739-1750 show a composition bias toward basic and acidic residues; the sequence is EISKQEQKKVDT. Residues 1756–1770 are compositionally biased toward polar residues; the sequence is AETSSRYSGAQDSGI. Ser-1789 carries the phosphoserine modification. The interval 2048–2067 is disordered; sequence HSSAHSKETSTPSDSILNMD. The 80-residue stretch at 2604 to 2683 folds into the SHR-BD domain; sequence HFVICNDTQE…TIQYKGRTAS (80 aa). A localizes the protein to the Golgi apparatus region spans residues 3880-3993; that stretch reads AFPITEISCA…KNKALRKGFS (114 aa).

It belongs to the VPS13 family. In terms of assembly, interacts with STX6. Interacts with STX12 (via N-terminus). Interacts with RAB6A isoform 1 (GTP-bound) and isoform 2 (GTP-bound). Interacts with RAB6B (GTP-bound). In terms of tissue distribution, ubiquitously expressed in all examined tissues.

It is found in the recycling endosome membrane. It localises to the cytoplasmic vesicle. The protein resides in the secretory vesicle. Its subcellular location is the acrosome membrane. The protein localises to the golgi apparatus. It is found in the cis-Golgi network membrane. It localises to the endoplasmic reticulum-Golgi intermediate compartment membrane. The protein resides in the trans-Golgi network membrane. Its subcellular location is the early endosome membrane. The protein localises to the lysosome membrane. In terms of biological role, mediates the transfer of lipids between membranes at organelle contact sites. Binds phosphatidylinositol 3-phosphate. Functions as a tethering factor in the slow endocytic recycling pathway, to assist traffic between early and recycling endosomes. Involved in the transport of proacrosomal vesicles to the nuclear dense lamina (NDL) during spermatid development. Plays a role in the assembly of the Golgi apparatus, possibly by mediating trafficking to the Golgi membrane. Plays a role in the development of the nervous system, and may be required for neuron projection development. May also play a role during adipose tissue development. Required for maintenance of the ocular lens. Required for proper organization of the Golgi. The chain is Intermembrane lipid transfer protein VPS13B from Mus musculus (Mouse).